A 622-amino-acid polypeptide reads, in one-letter code: Low affinity potassium transport system protein Kup (622 aa).

12 helical membrane passes run 9 to 29 (LSAI…TSPL), 49 to 69 (VFGF…IKYL), 103 to 123 (VIMG…TPAI), 137 to 157 (PELD…LFMI), 165 to 185 (VGKL…GLGL), 213 to 233 (VSFI…ALYA), 247 to 267 (WFSV…ALLL), 276 to 296 (PFFL…AALA), 337 to 357 (IYIP…IVSF), 363 to 383 (LAAA…ILST), 396 to 416 (FVAL…SANL), and 419 to 439 (LLSG…IMTT).

It belongs to the HAK/KUP transporter (TC 2.A.72) family.

It localises to the cell inner membrane. The enzyme catalyses K(+)(in) + H(+)(in) = K(+)(out) + H(+)(out). In terms of biological role, responsible for the low-affinity transport of potassium into the cell. Likely operates as a K(+):H(+) symporter. This Citrobacter koseri (strain ATCC BAA-895 / CDC 4225-83 / SGSC4696) protein is Low affinity potassium transport system protein Kup.